Here is a 459-residue protein sequence, read N- to C-terminus: Cysteine--tRNA ligase (459 aa).

Cys27 serves as a coordination point for Zn(2+). A 'HIGH' region motif is present at residues 29–39; it reads ITVYDDCHIGH. Zn(2+) is bound by residues Cys208, His233, and Glu237. Residues 265–269 carry the 'KMSKS' region motif; sequence KMSKS. Lys268 serves as a coordination point for ATP.

The protein belongs to the class-I aminoacyl-tRNA synthetase family. As to quaternary structure, monomer. Zn(2+) is required as a cofactor.

It localises to the cytoplasm. It carries out the reaction tRNA(Cys) + L-cysteine + ATP = L-cysteinyl-tRNA(Cys) + AMP + diphosphate. This is Cysteine--tRNA ligase from Francisella philomiragia subsp. philomiragia (strain ATCC 25017 / CCUG 19701 / FSC 153 / O#319-036).